Here is a 189-residue protein sequence, read N- to C-terminus: Imidazoleglycerol-phosphate dehydratase (189 aa).

Belongs to the imidazoleglycerol-phosphate dehydratase family.

Its subcellular location is the cytoplasm. The catalysed reaction is D-erythro-1-(imidazol-4-yl)glycerol 3-phosphate = 3-(imidazol-4-yl)-2-oxopropyl phosphate + H2O. The protein operates within amino-acid biosynthesis; L-histidine biosynthesis; L-histidine from 5-phospho-alpha-D-ribose 1-diphosphate: step 6/9. The polypeptide is Imidazoleglycerol-phosphate dehydratase (Nautilia profundicola (strain ATCC BAA-1463 / DSM 18972 / AmH)).